A 187-amino-acid chain; its full sequence is Elongation factor P (187 aa).

This sequence belongs to the elongation factor P family.

It is found in the cytoplasm. The protein operates within protein biosynthesis; polypeptide chain elongation. Involved in peptide bond synthesis. Stimulates efficient translation and peptide-bond synthesis on native or reconstituted 70S ribosomes in vitro. Probably functions indirectly by altering the affinity of the ribosome for aminoacyl-tRNA, thus increasing their reactivity as acceptors for peptidyl transferase. In Corynebacterium glutamicum (strain R), this protein is Elongation factor P.